Here is a 282-residue protein sequence, read N- to C-terminus: Acyl-CoA-binding domain-containing protein 6 (282 aa).

Positions 1–39 (MATPFLPSGATTGDSGGELSSGDDSGDMESFQTPEAEGT) are disordered. S41 is modified (phosphoserine). The 86-residue stretch at 42–127 (LAELFEKAAA…VKKLDPGWNP (86 aa)) folds into the ACB domain. An acyl-CoA contacts are provided by residues 69–73 (YARFK) and K95. S106 carries the post-translational modification Phosphoserine. Residue Y114 participates in an acyl-CoA binding. ANK repeat units follow at residues 191–220 (EGRALLHWACDRGHKELVKVLLQYEAGINC) and 224–253 (EGQTALHYAAACEFLDIVELLLQSGADPTL).

In terms of assembly, monomer.

It is found in the cytoplasm. Its subcellular location is the nucleus. Its function is as follows. Binds long-chain acyl-coenzyme A molecules with a strong preference for unsaturated C18:1-CoA, lower affinity for unsaturated C20:4-CoA, and very weak affinity for saturated C16:0-CoA. Does not bind fatty acids. Plays a role in protein N-myristoylation. The chain is Acyl-CoA-binding domain-containing protein 6 (Acbd6) from Mus musculus (Mouse).